Reading from the N-terminus, the 182-residue chain is UPF0301 protein NMB1336 (182 aa).

This sequence belongs to the UPF0301 (AlgH) family.

In Neisseria meningitidis serogroup B (strain ATCC BAA-335 / MC58), this protein is UPF0301 protein NMB1336.